The sequence spans 481 residues: GTPase Obg (481 aa).

In terms of domain architecture, Obg spans 2–159 (TTFVDRVVLH…IDVVLELKSV (158 aa)). Residues 160 to 330 (ADVGLVGYPS…LMYAMGELVT (171 aa)) form the OBG-type G domain. GTP is bound by residues 166–173 (GYPSAGKS), 191–195 (FTTLV), 212–215 (DVPG), 282–285 (NKVD), and 311–313 (SAA). Residues Ser173 and Thr193 each contribute to the Mg(2+) site. The OCT domain maps to 348–426 (PKAVDDAGFT…IGEREFDWQP (79 aa)). Residues 439–452 (GDQRLAEKSERPSA) show a composition bias toward basic and acidic residues. Positions 439-481 (GDQRLAEKSERPSATERLAARKARRQRPEDEAEADEPVGDGEE) are disordered. Residues 468 to 481 (DEAEADEPVGDGEE) are compositionally biased toward acidic residues.

Belongs to the TRAFAC class OBG-HflX-like GTPase superfamily. OBG GTPase family. As to quaternary structure, monomer. It depends on Mg(2+) as a cofactor.

It localises to the cytoplasm. Functionally, an essential GTPase which binds GTP, GDP and possibly (p)ppGpp with moderate affinity, with high nucleotide exchange rates and a fairly low GTP hydrolysis rate. Plays a role in control of the cell cycle, stress response, ribosome biogenesis and in those bacteria that undergo differentiation, in morphogenesis control. This chain is GTPase Obg, found in Salinispora tropica (strain ATCC BAA-916 / DSM 44818 / JCM 13857 / NBRC 105044 / CNB-440).